We begin with the raw amino-acid sequence, 238 residues long: MVIVLASANQHKICEFQAMLKNVKEKVKVYAYGELLETFEIAENGNSFKENATLKVKAIYQALYTLSQSTMQENIRNLFAQPLAIIAEDSGLCVPVLNGEPGIYSARYAHHKQFASMQYKNTDEANLYCLLNALTHCAPTPAFFVAHIALIFIKPYFCTYTLPPLEQCVIEHFEGILNGEVINEMRGNEGFGYDPLFIPAEHNPQSLTLAEFDMSAKNTISHRKKALSQCINRLFDKS.

7–12 (SANQHK) is a substrate binding site. Residue Asp89 is the Proton acceptor of the active site. A Mg(2+)-binding site is contributed by Asp89. Substrate-binding positions include Ser90, 191–194 (FGYD), Lys217, and 222–223 (HR).

Belongs to the HAM1 NTPase family. Homodimer. Mg(2+) is required as a cofactor.

The enzyme catalyses XTP + H2O = XMP + diphosphate + H(+). It catalyses the reaction dITP + H2O = dIMP + diphosphate + H(+). The catalysed reaction is ITP + H2O = IMP + diphosphate + H(+). Functionally, pyrophosphatase that catalyzes the hydrolysis of nucleoside triphosphates to their monophosphate derivatives, with a high preference for the non-canonical purine nucleotides XTP (xanthosine triphosphate), dITP (deoxyinosine triphosphate) and ITP. Seems to function as a house-cleaning enzyme that removes non-canonical purine nucleotides from the nucleotide pool, thus preventing their incorporation into DNA/RNA and avoiding chromosomal lesions. This chain is dITP/XTP pyrophosphatase, found in Helicobacter hepaticus (strain ATCC 51449 / 3B1).